Here is a 389-residue protein sequence, read N- to C-terminus: Serpin-Z3 (389 aa).

The RCL stretch occupies residues 337 to 361 (GTEAAAVSVAIMMPQCLMRNPDFVA).

Belongs to the serpin family.

Its function is as follows. Probable serine protease inhibitor. The protein is Serpin-Z3 of Arabidopsis thaliana (Mouse-ear cress).